We begin with the raw amino-acid sequence, 320 residues long: Meso-diaminopimelate D-dehydrogenase (320 aa).

NADP(+)-binding positions include 11–14 (YGNL), 35–37 (SRR), 65–68 (CMGS), 88–90 (TYD), and 117–121 (TGWDP). Substrate contacts are provided by residues Asp90, Asp120, Trp144, 150–151 (QG), Thr169, Arg195, His244, and Asn270.

In terms of assembly, homodimer.

The enzyme catalyses meso-2,6-diaminopimelate + NADP(+) + H2O = (S)-2-amino-6-oxoheptanedioate + NH4(+) + NADPH + H(+). Its pathway is amino-acid biosynthesis; L-lysine biosynthesis via DAP pathway; DL-2,6-diaminopimelate from (S)-tetrahydrodipicolinate: step 1/1. Its activity is regulated as follows. L,L-2,6-diaminopimelate and D,D-2,6-diaminopimelate competitively inhibit the oxidative deamination of meso-2,6-diaminopimelate. The enzyme is also inhibited by L-cysteine, and by p-chloromercuribenzoate, iodoacetic acid and HgCl(2) in vitro. Functionally, catalyzes the reversible NADPH-dependent reductive amination of L-2-amino-6-oxopimelate, the acyclic form of L-tetrahydrodipicolinate, to generate the meso compound, D,L-2,6-diaminopimelate. Probably plays a role in lysine biosynthesis. Exhibits a high substrate specificity for meso-2,6-diaminopimelate, since L,L-2,6-diaminopimelate, D,D-2,6-diaminopimelate, L-glutamate, L-alanine, L-leucine, L-valine, L-aspartate, L-threonine, L-homoserine, L-methionine, L-lysine, L-serine, L-phenylalanine, L-tyrosine, L-tryptophan, L-ornithine, L-histidine, L-arginine, D-glutamate, and D-alanine are not substrates for the oxidative deamination reaction. Can use NAD(+) only poorly since the activity observed in the presence of NAD(+) is about 3% of that with NADP(+). In Corynebacterium glutamicum (strain ATCC 13032 / DSM 20300 / JCM 1318 / BCRC 11384 / CCUG 27702 / LMG 3730 / NBRC 12168 / NCIMB 10025 / NRRL B-2784 / 534), this protein is Meso-diaminopimelate D-dehydrogenase (ddh).